Consider the following 273-residue polypeptide: Bis(5'-nucleosyl)-tetraphosphatase, symmetrical (273 aa).

Belongs to the Ap4A hydrolase family.

The enzyme catalyses P(1),P(4)-bis(5'-adenosyl) tetraphosphate + H2O = 2 ADP + 2 H(+). Hydrolyzes diadenosine 5',5'''-P1,P4-tetraphosphate to yield ADP. This Buchnera aphidicola subsp. Schizaphis graminum (strain Sg) protein is Bis(5'-nucleosyl)-tetraphosphatase, symmetrical (apaH).